The primary structure comprises 846 residues: Protein kintoun (846 aa).

Disordered regions lie at residues Met-1–Asp-21, Asp-377–Pro-412, His-581–Ile-657, and His-743–Ile-846. Ser-378 carries the phosphoserine modification. The span at Pro-399 to Ala-408 shows a compositional bias: low complexity. Composition is skewed to basic residues over residues Leu-596 to Arg-612 and Gln-750 to Gln-766. Residue Ser-770 is modified to Phosphoserine. Basic and acidic residues predominate over residues Thr-821–Asn-832.

It belongs to the PIH1 family. Kintoun subfamily. In terms of assembly, interacts with Pp1alpha-96A, Pp1-87B, Pp1-13C and flw.

It is found in the cytoplasm. Its function is as follows. Required for cytoplasmic pre-assembly of axonemal dyneins, thereby playing a central role in motility in cilia and flagella. Involved in pre-assembly of dynein arm complexes in the cytoplasm before intraflagellar transport loads them for the ciliary compartment. In Drosophila pseudoobscura pseudoobscura (Fruit fly), this protein is Protein kintoun.